Reading from the N-terminus, the 308-residue chain is Glutaminase (308 aa).

Substrate contacts are provided by serine 66, asparagine 117, glutamate 161, asparagine 168, tyrosine 192, tyrosine 244, and valine 262.

It belongs to the glutaminase family. In terms of assembly, homotetramer.

The enzyme catalyses L-glutamine + H2O = L-glutamate + NH4(+). The polypeptide is Glutaminase (Proteus mirabilis (strain HI4320)).